A 103-amino-acid polypeptide reads, in one-letter code: Cyclotide vibi-I (103 aa).

Residues 1-9 (AAFALPAFA) form the signal peptide. Positions 10-69 (SFEKDVITPAALEAVLNRKAPLSNIMMENDAILNVIANVKTVISNPVLEEALLKTNHGVN) are excised as a propeptide. The segment at residues 70–99 (GIPCGESCVWIPCLTSTVGCSCKSKVCYRN) is a cross-link (cyclopeptide (Gly-Asn)). 3 disulfide bridges follow: cysteine 73-cysteine 89, cysteine 77-cysteine 91, and cysteine 82-cysteine 96. A propeptide spanning residues 100 to 103 (SLDN) is cleaved from the precursor.

In terms of processing, this is a cyclic peptide.

Functionally, probably participates in a plant defense mechanism. This Viola biflora (Yellow wood violet) protein is Cyclotide vibi-I.